The primary structure comprises 371 residues: Aspartate-semialdehyde dehydrogenase (371 aa).

NADP(+) contacts are provided by residues 9-12 (RGMV), 37-38 (TS), and glutamine 73. Arginine 102 contributes to the phosphate binding site. Residue cysteine 135 is the Acyl-thioester intermediate of the active site. Glutamine 162 is a binding site for substrate. NADP(+)-binding positions include 165 to 166 (SG) and proline 193. Residue glutamate 241 participates in substrate binding. Position 244 (lysine 244) interacts with phosphate. Arginine 268 is a binding site for substrate. Histidine 275 (proton acceptor) is an active-site residue. Glutamine 351 serves as a coordination point for NADP(+).

The protein belongs to the aspartate-semialdehyde dehydrogenase family. Homodimer.

It catalyses the reaction L-aspartate 4-semialdehyde + phosphate + NADP(+) = 4-phospho-L-aspartate + NADPH + H(+). It functions in the pathway amino-acid biosynthesis; L-lysine biosynthesis via DAP pathway; (S)-tetrahydrodipicolinate from L-aspartate: step 2/4. Its pathway is amino-acid biosynthesis; L-methionine biosynthesis via de novo pathway; L-homoserine from L-aspartate: step 2/3. It participates in amino-acid biosynthesis; L-threonine biosynthesis; L-threonine from L-aspartate: step 2/5. Functionally, catalyzes the NADPH-dependent formation of L-aspartate-semialdehyde (L-ASA) by the reductive dephosphorylation of L-aspartyl-4-phosphate. This Neisseria meningitidis serogroup B (strain ATCC BAA-335 / MC58) protein is Aspartate-semialdehyde dehydrogenase.